A 241-amino-acid polypeptide reads, in one-letter code: Platelet-derived growth factor subunit B (241 aa).

The signal sequence occupies residues 1-20 (MNRCWALFLPLCCYLRLVSA). The propeptide at 21 to 81 (EGDPIPEELY…ELESSSRGRR (61 aa)) is removed in mature form. An N-linked (GlcNAc...) asparagine glycan is attached at N63. Disulfide bonds link C97–C141, C130–C178, and C134–C180. Positions 191-241 (RSPGTSREQRAKTPQARVTIRTVRIRRPPKGKHRKFKHTHDKAALKETLGA) are cleaved as a propeptide — removed in mature form. Residues 217 to 230 (RPPKGKHRKFKHTH) show a composition bias toward basic residues. Residues 217-241 (RPPKGKHRKFKHTHDKAALKETLGA) are disordered.

This sequence belongs to the PDGF/VEGF growth factor family. As to quaternary structure, antiparallel homodimer; disulfide-linked. Antiparallel heterodimer with PDGFA; disulfide-linked. The PDGFB homodimer interacts with PDGFRA and PDGFRB homodimers, and with heterodimers formed by PDGFRA and PDGFRB. The heterodimer composed of PDGFA and PDGFB interacts with PDGFRB homodimers, and with heterodimers formed by PDGFRA and PDGFRB. Interacts with XLKD1. Interacts with LRP1. Interacts with SORL1 (via the N-terminal ectodomain). Interacts with CD82; this interaction inhibits PDGFB-mediated signaling pathway. As to expression, localized to vascular smooth muscle cells. Also weakly expressed by cortical interstitial cells but absent in tubules. Up-regulated in areas of renal fibrosis. In mice with unilateral ureteral obstruction, an increased expression in interstitial cells and in some tubules observed after day 4.

It localises to the secreted. Growth factor that plays an essential role in the regulation of embryonic development, cell proliferation, cell migration, survival and chemotaxis. Potent mitogen for cells of mesenchymal origin. Required for normal proliferation and recruitment of pericytes and vascular smooth muscle cells in the central nervous system, skin, lung, heart and placenta. Required for normal blood vessel development, and for normal development of kidney glomeruli. Plays an important role in wound healing. Signaling is modulated by the formation of heterodimers with PDGFA. This is Platelet-derived growth factor subunit B (Pdgfb) from Mus musculus (Mouse).